Reading from the N-terminus, the 566-residue chain is Multidrug and toxin extrusion protein 1 (566 aa).

An N-acetylmethionine modification is found at M1. 13 consecutive transmembrane segments (helical) span residues 37 to 57 (LLVLAGPAFLAQLMMFLISFI), 72 to 92 (AVTLAIAVINVTGISVGHGLS), 120 to 140 (LILLLCCFPCWALFINTEQIL), 152 to 172 (LTQTYVMVFIPALPAAFLYTL), 176 to 196 (YLLNQGIVLPQVITGIAANLV), 216 to 236 (ALANTISQFALAIFLFLYILW), 257 to 276 (SFLQLAIPSMLMLCIEWWAY), 295 to 315 (SITYELAIIVYMIPAGFSVAA), 336 to 356 (AISLIVTELFAVTFCVLLLGC), 370 to 390 (IVALVAQVVPIYAVSHLFEAL), 409 to 429 (IVNAIGYYVIGLPIGISLMFV), 437 to 457 (LWSGIIICSVCQTSCFLVFIA), and 543 to 563 (GLLFLGVVLVLVGGILVRVYI).

It belongs to the multi antimicrobial extrusion (MATE) (TC 2.A.66.1) family. Highly expressed in kidney and placenta, moderately in stomach, colon, lung, spleen, skeletal muscle and prostate, and slightly in spleen. In the kidney, found in medulla and cortex, especially in the proximal convoluted and straight tubules. No expression was observed in heart, brain, small intestine and liver. Expressed in Sertoli cells in testis.

It localises to the cell membrane. It is found in the apical cell membrane. The enzyme catalyses thiamine(out) + H(+)(in) = thiamine(in) + H(+)(out). The catalysed reaction is estrone 3-sulfate(in) + H(+)(out) = estrone 3-sulfate(out) + H(+)(in). It carries out the reaction creatinine(in) + H(+)(out) = creatinine(out) + H(+)(in). It catalyses the reaction agmatine(in) + H(+)(out) = agmatine(out) + H(+)(in). Its function is as follows. Multidrug efflux pump that functions as a H(+)/organic cation antiporter. Plays a physiological role in the excretion of cationic compounds including endogenous metabolites, drugs, toxins through the kidney and liver, into urine and bile respectively. Mediates the efflux of endogenous compounds such as creatinine, vitamin B1/thiamine, agmatine and estrone-3-sulfate. May also contribute to regulate the transport of cationic compounds in testis across the blood-testis-barrier. The protein is Multidrug and toxin extrusion protein 1 (Slc47a1) of Rattus norvegicus (Rat).